Consider the following 892-residue polypeptide: Alanine--tRNA ligase (892 aa).

Positions 596, 600, 700, and 704 each coordinate Zn(2+).

Belongs to the class-II aminoacyl-tRNA synthetase family. It depends on Zn(2+) as a cofactor.

The protein localises to the cytoplasm. It catalyses the reaction tRNA(Ala) + L-alanine + ATP = L-alanyl-tRNA(Ala) + AMP + diphosphate. Catalyzes the attachment of alanine to tRNA(Ala) in a two-step reaction: alanine is first activated by ATP to form Ala-AMP and then transferred to the acceptor end of tRNA(Ala). Also edits incorrectly charged Ser-tRNA(Ala) and Gly-tRNA(Ala) via its editing domain. This Methanococcus maripaludis (strain C5 / ATCC BAA-1333) protein is Alanine--tRNA ligase.